The primary structure comprises 275 residues: Formamidopyrimidine-DNA glycosylase (275 aa).

Residue proline 2 is the Schiff-base intermediate with DNA of the active site. Catalysis depends on glutamate 3, which acts as the Proton donor. The active-site Proton donor; for beta-elimination activity is the lysine 58. Positions 91, 109, and 154 each coordinate DNA. Residues 240-274 (AVYERAGLACRVCGTPIRRLVQGQRATYFCPHCQK) form an FPG-type zinc finger. Arginine 264 acts as the Proton donor; for delta-elimination activity in catalysis.

Belongs to the FPG family. In terms of assembly, monomer. The cofactor is Zn(2+).

It catalyses the reaction Hydrolysis of DNA containing ring-opened 7-methylguanine residues, releasing 2,6-diamino-4-hydroxy-5-(N-methyl)formamidopyrimidine.. The catalysed reaction is 2'-deoxyribonucleotide-(2'-deoxyribose 5'-phosphate)-2'-deoxyribonucleotide-DNA = a 3'-end 2'-deoxyribonucleotide-(2,3-dehydro-2,3-deoxyribose 5'-phosphate)-DNA + a 5'-end 5'-phospho-2'-deoxyribonucleoside-DNA + H(+). In terms of biological role, involved in base excision repair of DNA damaged by oxidation or by mutagenic agents. Acts as a DNA glycosylase that recognizes and removes damaged bases. Has a preference for oxidized purines, such as 7,8-dihydro-8-oxoguanine (8-oxoG). Has AP (apurinic/apyrimidinic) lyase activity and introduces nicks in the DNA strand. Cleaves the DNA backbone by beta-delta elimination to generate a single-strand break at the site of the removed base with both 3'- and 5'-phosphates. This Bordetella avium (strain 197N) protein is Formamidopyrimidine-DNA glycosylase.